We begin with the raw amino-acid sequence, 202 residues long: MLKSPYSGGHLEVIVGPMFSGKSEELIRRVTRALIARQRVQVFKPAVDDRYHESAVASHAGRTVGALAVGDVADIRAHLSGEAPLLQASAEMPDVIGIDEVQFFGPELVPLALELADAGVRVILAGLDLDFRAEPFGCMPDLLARAESVEKLTAICTQCGAPATRSQRLISGEPARFDDPVVLVGALESYEARCRLHHVVTR.

Residues 16-23 and 99-102 each bind ATP; these read GPMFSGKS and DEVQ. The active-site Proton acceptor is Glu100. The Zn(2+) site is built by Cys156, Cys159, Cys194, and His197.

This sequence belongs to the thymidine kinase family. Homotetramer.

Its subcellular location is the cytoplasm. It carries out the reaction thymidine + ATP = dTMP + ADP + H(+). This chain is Thymidine kinase, found in Deinococcus deserti (strain DSM 17065 / CIP 109153 / LMG 22923 / VCD115).